A 760-amino-acid polypeptide reads, in one-letter code: DNA replication licensing factor mcm7 (760 aa).

An MCM domain is found at 353 to 559; that stretch reads VYEKLAKSIA…ETDEHLAQHV (207 aa). Residues Y366, G406, A408, K409, S410, N511, R536, and R630 each coordinate ATP. The short motif at 535–538 is the Arginine finger element; the sequence is SRFD.

It belongs to the MCM family. As to quaternary structure, component of the mcm2-7 complex. The complex forms a toroidal hexameric ring with the proposed subunit order mcm2-mcm6-mcm4-mcm7-mcm3-mcm5. The heterodimers of mcm4/mcm6 and mcm3/mcm5 interact with mcm2 and mcm7. Interacts with sld3 and mcm10.

The protein resides in the nucleus. The enzyme catalyses ATP + H2O = ADP + phosphate + H(+). Functionally, acts as a component of the MCM2-7 complex (MCM complex) which is the replicative helicase essential for 'once per cell cycle' DNA replication initiation and elongation in eukaryotic cells. Core component of CDC45-MCM-GINS (CMG) helicase, the molecular machine that unwinds template DNA during replication, and around which the replisome is built. The active ATPase sites in the MCM2-7 ring are formed through the interaction surfaces of two neighboring subunits such that a critical structure of a conserved arginine finger motif is provided in trans relative to the ATP-binding site of the Walker A box of the adjacent subunit. The six ATPase active sites, however, are likely to contribute differentially to the complex helicase activity. Required for the progression of S phase. This is DNA replication licensing factor mcm7 (mcm7) from Schizosaccharomyces pombe (strain 972 / ATCC 24843) (Fission yeast).